Consider the following 623-residue polypeptide: V-type proton ATPase catalytic subunit A (623 aa).

252 to 259 is an ATP binding site; it reads GAFGCGKT.

Belongs to the ATPase alpha/beta chains family. V-ATPase is a heteromultimeric enzyme composed of a peripheral catalytic V1 complex (main components: subunits A, B, C, D, E, and F) attached to an integral membrane V0 proton pore complex (main component: the proteolipid protein).

It catalyses the reaction ATP + H2O + 4 H(+)(in) = ADP + phosphate + 5 H(+)(out). Functionally, catalytic subunit of the peripheral V1 complex of vacuolar ATPase. V-ATPase vacuolar ATPase is responsible for acidifying a variety of intracellular compartments in eukaryotic cells. The protein is V-type proton ATPase catalytic subunit A of Daucus carota (Wild carrot).